A 613-amino-acid chain; its full sequence is Transcription factor MTB1 (613 aa).

The interval 48–130 (LQNKLSDLVE…RVLQKLHMLF (83 aa)) is JAZ-interaction domain. Disordered regions lie at residues 256 to 285 (EKNE…FGHD) and 391 to 441 (AHNV…AERQ). Residues 260–270 (GNNPRLSNSGA) are compositionally biased toward polar residues. Basic and acidic residues-rich tracts occupy residues 394-417 (VESE…DEKR) and 427-441 (NGRE…AERQ). Residues 430-443 (EEPLNHVEAERQRR) form a basic motif; degenerate region. Residues 430-479 (EEPLNHVEAERQRREKLNQRFYALRAVVPNISKMDKASLLGDAIAYITEL) enclose the bHLH domain. The segment at 444-479 (EKLNQRFYALRAVVPNISKMDKASLLGDAIAYITEL) is helix-loop-helix motif. Residues 490 to 513 (RELRLGSTSRDAITSEDSPSSEIQ) form a disordered region. The segment covering 495-512 (GSTSRDAITSEDSPSSEI) has biased composition (polar residues).

In terms of assembly, interacts with MYC2 (via N-terminus). MTB1 competes with MED25 for binding to MYC2. Interacts (via N-terminus) with JAZ7.

It is found in the nucleus. Transcription factor that negatively regulates jasmonate (JA) signaling. Negatively regulates JA-dependent response to wounding, JA-induced expression of defense genes, JA-dependent responses against herbivorous insects, and JA-dependent resistance against Botrytis cinerea infection. Plays a positive role in resistance against the bacterial pathogen Pseudomonas syringae pv tomato DC3000. The protein is Transcription factor MTB1 of Solanum lycopersicum (Tomato).